The following is a 343-amino-acid chain: General stress protein 30 (343 aa).

It belongs to the polysaccharide pyruvyl transferase family.

The sequence is that of General stress protein 30 (yxaB) from Bacillus subtilis (strain 168).